Reading from the N-terminus, the 512-residue chain is Solute carrier family 40 member 2 (512 aa).

The segment at methionine 1–serine 28 is disordered. The span at glutamine 17 to proline 27 shows a compositional bias: acidic residues. The next 11 membrane-spanning stretches (helical) occupy residues valine 55–valine 75, leucine 105–valine 125, phenylalanine 133–serine 153, glycine 187–valine 207, isoleucine 214–valine 234, isoleucine 310–leucine 330, tyrosine 343–tyrosine 363, glycine 376–valine 396, methionine 405–isoleucine 425, glycine 442–valine 462, and phenylalanine 468–isoleucine 488.

The protein belongs to the ferroportin (FP) (TC 2.A.100) family. SLC40A subfamily.

The protein resides in the vacuole membrane. Vacuolar transporter that is involved in the transport of excess nickel into the vacuole under iron deficiency, increasing cellular tolerance to nickel under iron deficiency stress response. In Arabidopsis thaliana (Mouse-ear cress), this protein is Solute carrier family 40 member 2 (IREG2).